The chain runs to 604 residues: Complement factor I (604 aa).

A signal peptide spans Met1 to Ser18. Intrachain disulfides connect Cys36/Cys260, Cys46/Cys57, Cys51/Cys62, Cys64/Cys96, Cys70/Cys89, Cys78/Cys109, Cys144/Cys186, Cys157/Cys219, Cys191/Cys201, Cys234/Cys252, Cys246/Cys261, Cys264/Cys276, Cys271/Cys289, Cys283/Cys298, Cys349/Cys474, Cys387/Cys403, Cys395/Cys465, Cys488/Cys552, Cys516/Cys531, and Cys542/Cys571. Asn40 carries an N-linked (GlcNAc...) asparagine glycan. The region spanning Ile58–Ala111 is the Kazal-like domain. N-linked (GlcNAc...) asparagine glycans are attached at residues Asn106, Asn116, and Asn182. In terms of domain architecture, SRCR spans Val117–Val217. LDL-receptor class A domains lie at Val218 to Lys262 and Gly263 to Glu299. 6 residues coordinate Ca(2+): Lys244, Asp247, Val249, Asp251, Asp257, and Glu258. Ca(2+) contacts are provided by Asn284, Glu286, Asp288, Asp294, and Glu295. Positions Val362–Gly595 constitute a Peptidase S1 domain. Catalysis depends on charge relay system residues His402 and Asp450. Asn515 carries an N-linked (GlcNAc...) asparagine glycan. The Charge relay system role is filled by Ser546. Asn557 is a glycosylation site (N-linked (GlcNAc...) asparagine).

Belongs to the peptidase S1 family. In terms of assembly, heterodimer of a light and heavy chains; disulfide-linked. The fully processed and mature protein circulates as a zymogen, and is allosterically activated by substrate-induced remodeling of the active site. Interacts with C3b. Interacts with complement factor H. Expressed in the liver by hepatocytes. Also present in other cells such as monocytes, fibroblasts or keratinocytes.

It is found in the secreted. It localises to the extracellular space. It catalyses the reaction Inactivates complement subcomponents C3b, iC3b and C4b by proteolytic cleavage.. Functionally, trypsin-like serine protease that plays an essential role in regulating the immune response by controlling all complement pathways. Inhibits these pathways by cleaving three peptide bonds in the alpha-chain of C3b and two bonds in the alpha-chain of C4b thereby inactivating these proteins. Essential cofactors for these reactions include factor H and C4BP in the fluid phase and membrane cofactor protein/CD46 and CR1 on cell surfaces. The presence of these cofactors on healthy cells allows degradation of deposited C3b by CFI in order to prevent undesired complement activation, while in apoptotic cells or microbes, the absence of such cofactors leads to C3b-mediated complement activation and subsequent opsonization. This chain is Complement factor I (Cfi), found in Rattus norvegicus (Rat).